The chain runs to 120 residues: Crustacean hyperglycemic hormones 1 (120 aa).

The first 27 residues, 1–27 (MTAFRMVWSMLLASLLMLLVASSTAPA), serve as a signal peptide directing secretion. 3 disulfides stabilise this stretch: Cys-53–Cys-89, Cys-69–Cys-85, and Cys-72–Cys-98. The residue at position 118 (Val-118) is a Valine amide.

The protein belongs to the arthropod CHH/MIH/GIH/VIH hormone family.

The protein localises to the secreted. In terms of biological role, hormone found in the sinus gland of isopods and decapods which controls the blood sugar level. Has a secretagogue action over the amylase released from the midgut gland. May act as a stress hormone and may be involved in the control of molting and reproduction. The protein is Crustacean hyperglycemic hormones 1 (CHH1) of Penaeus monodon (Giant tiger prawn).